The following is a 215-amino-acid chain: Cytochrome b6 (215 aa).

A helical transmembrane segment spans residues 32–52 (IFYCLGGITLTCFLVQVATGF). Cys-35 contacts heme c. His-86 and His-100 together coordinate heme b. Transmembrane regions (helical) follow at residues 90 to 110 (ASMM…TGGF), 116 to 136 (LTWV…VTGY), and 186 to 206 (LHTF…FPMI). Residues His-187 and His-202 each contribute to the heme b site.

The protein belongs to the cytochrome b family. PetB subfamily. The 4 large subunits of the cytochrome b6-f complex are cytochrome b6, subunit IV (17 kDa polypeptide, PetD), cytochrome f and the Rieske protein, while the 4 small subunits are PetG, PetL, PetM and PetN. The complex functions as a dimer. It depends on heme b as a cofactor. The cofactor is heme c.

It is found in the plastid. Its subcellular location is the chloroplast thylakoid membrane. Functionally, component of the cytochrome b6-f complex, which mediates electron transfer between photosystem II (PSII) and photosystem I (PSI), cyclic electron flow around PSI, and state transitions. The sequence is that of Cytochrome b6 from Populus alba (White poplar).